The following is a 199-amino-acid chain: Holliday junction branch migration complex subunit RuvA (199 aa).

Positions 1–64 (MIALLTGKLA…EDAINLYGFR (64 aa)) are domain I. Residues 65–143 (TQQEKELFQL…KLGLAQPQAG (79 aa)) form a domain II region. Positions 144–148 (GTTAP) are flexible linker. Residues 149 to 199 (AKQEIRDDVLSALINLGYKEAVVQKALAELKVTEDATVELVLKQALKILMK) form a domain III region.

The protein belongs to the RuvA family. In terms of assembly, homotetramer. Forms an RuvA(8)-RuvB(12)-Holliday junction (HJ) complex. HJ DNA is sandwiched between 2 RuvA tetramers; dsDNA enters through RuvA and exits via RuvB. An RuvB hexamer assembles on each DNA strand where it exits the tetramer. Each RuvB hexamer is contacted by two RuvA subunits (via domain III) on 2 adjacent RuvB subunits; this complex drives branch migration. In the full resolvosome a probable DNA-RuvA(4)-RuvB(12)-RuvC(2) complex forms which resolves the HJ.

The protein resides in the cytoplasm. Its function is as follows. The RuvA-RuvB-RuvC complex processes Holliday junction (HJ) DNA during genetic recombination and DNA repair, while the RuvA-RuvB complex plays an important role in the rescue of blocked DNA replication forks via replication fork reversal (RFR). RuvA specifically binds to HJ cruciform DNA, conferring on it an open structure. The RuvB hexamer acts as an ATP-dependent pump, pulling dsDNA into and through the RuvAB complex. HJ branch migration allows RuvC to scan DNA until it finds its consensus sequence, where it cleaves and resolves the cruciform DNA. The sequence is that of Holliday junction branch migration complex subunit RuvA from Citrifermentans bemidjiense (strain ATCC BAA-1014 / DSM 16622 / JCM 12645 / Bem) (Geobacter bemidjiensis).